Reading from the N-terminus, the 380-residue chain is N-acetylneuraminate epimerase (380 aa).

A signal peptide spans 1-21; that stretch reads MKFTKTALFTVLAATAFAAQA. Kelch repeat units follow at residues 42–86, 88–140, 142–176, 177–222, 225–274, 296–349, and 351–380; these read TVYV…AGVN, KLYV…AADG, KIYF…AIFD, PYFN…AIKD, LLVV…IAGG, ANYE…SYNN, and VLLI…LTVE. Glu231 functions as the Proton acceptor in the catalytic mechanism.

Belongs to the NanM family. In terms of assembly, homodimer.

The protein resides in the periplasm. It carries out the reaction N-acetyl-alpha-neuraminate = N-acetyl-beta-neuraminate. In terms of biological role, converts alpha-N-acetylneuranimic acid (Neu5Ac) to the beta-anomer, accelerating the equilibrium between the alpha- and beta-anomers. Probably facilitates sialidase-negative bacteria to compete successfully for limited amounts of extracellular Neu5Ac, which is likely taken up in the beta-anomer. In addition, the rapid removal of sialic acid from solution might be advantageous to the bacterium to damp down host responses. In Pasteurella multocida (strain Pm70), this protein is N-acetylneuraminate epimerase.